Consider the following 149-residue polypeptide: Lymphocyte antigen 6 complex locus protein G5c (149 aa).

The N-terminal stretch at 1–41 (MLFMAGPAASWSLRPLGLHGVPQALCAVLLTVLVMKTLVLG) is a signal peptide. One can recognise a UPAR/Ly6 domain in the interval 59–149 (LNCYRCLLET…NPDNRKNSMH (91 aa)). Intrachain disulfides connect cysteine 61/cysteine 88, cysteine 64/cysteine 73, cysteine 80/cysteine 106, cysteine 115/cysteine 132, and cysteine 133/cysteine 138. The N-linked (GlcNAc...) asparagine glycan is linked to asparagine 95.

Forms oligomers. Post-translationally, N-glycosylated. In terms of tissue distribution, detected in adult brain.

It localises to the secreted. May have a role in hematopoietic cell differentiation. The chain is Lymphocyte antigen 6 complex locus protein G5c (Ly6g5c) from Mus musculus (Mouse).